The following is a 413-amino-acid chain: 3-hydroxy-3-methylglutaryl-coenzyme A reductase (413 aa).

Catalysis depends on charge relay system residues E106 and D312. H408 acts as the Proton donor in catalysis.

It belongs to the HMG-CoA reductase family.

It carries out the reaction (R)-mevalonate + 2 NADP(+) + CoA = (3S)-3-hydroxy-3-methylglutaryl-CoA + 2 NADPH + 2 H(+). The protein operates within metabolic intermediate biosynthesis; (R)-mevalonate biosynthesis; (R)-mevalonate from acetyl-CoA: step 3/3. Converts HMG-CoA to mevalonate. The polypeptide is 3-hydroxy-3-methylglutaryl-coenzyme A reductase (hmgA) (Pyrococcus horikoshii (strain ATCC 700860 / DSM 12428 / JCM 9974 / NBRC 100139 / OT-3)).